Reading from the N-terminus, the 536-residue chain is CTP synthase (536 aa).

The segment at 1 to 267 (MTKFIFVTGG…DDIVIKRLQL (267 aa)) is amidoligase domain. S13 is a CTP binding site. S13 provides a ligand contact to UTP. Position 14–19 (14–19 (SLGKGI)) interacts with ATP. Y54 contacts L-glutamine. D71 is an ATP binding site. Mg(2+) contacts are provided by D71 and E141. CTP-binding positions include 148–150 (DIE), 188–193 (KTKPTQ), and K224. Residues 188-193 (KTKPTQ) and K224 contribute to the UTP site. An ATP-binding site is contributed by 240 to 242 (RDA). The Glutamine amidotransferase type-1 domain occupies 293–535 (TIGLVGKYVS…IEASLKYQQN (243 aa)). G355 is an L-glutamine binding site. The active-site Nucleophile; for glutamine hydrolysis is C382. L-glutamine contacts are provided by residues 383–386 (LGMQ), E406, and R463. Catalysis depends on residues H508 and E510.

Belongs to the CTP synthase family. As to quaternary structure, homotetramer.

It catalyses the reaction UTP + L-glutamine + ATP + H2O = CTP + L-glutamate + ADP + phosphate + 2 H(+). It carries out the reaction L-glutamine + H2O = L-glutamate + NH4(+). The catalysed reaction is UTP + NH4(+) + ATP = CTP + ADP + phosphate + 2 H(+). Its pathway is pyrimidine metabolism; CTP biosynthesis via de novo pathway; CTP from UDP: step 2/2. With respect to regulation, allosterically activated by GTP, when glutamine is the substrate; GTP has no effect on the reaction when ammonia is the substrate. The allosteric effector GTP functions by stabilizing the protein conformation that binds the tetrahedral intermediate(s) formed during glutamine hydrolysis. Inhibited by the product CTP, via allosteric rather than competitive inhibition. In terms of biological role, catalyzes the ATP-dependent amination of UTP to CTP with either L-glutamine or ammonia as the source of nitrogen. Regulates intracellular CTP levels through interactions with the four ribonucleotide triphosphates. The sequence is that of CTP synthase from Staphylococcus aureus (strain NCTC 8325 / PS 47).